A 215-amino-acid chain; its full sequence is Pyridoxine/pyridoxamine 5'-phosphate oxidase (215 aa).

Residues arginine 9–tyrosine 12 and lysine 69 contribute to the substrate site. FMN is bound by residues arginine 64 to lysine 69, phenylalanine 79 to threonine 80, lysine 86, and glutamine 108. Positions 126, 130, and 134 each coordinate substrate. Residues glutamine 143–serine 144 and tryptophan 188 contribute to the FMN site. Residue arginine 194–histidine 196 coordinates substrate. Arginine 198 contacts FMN.

Belongs to the pyridoxamine 5'-phosphate oxidase family. Homodimer. Requires FMN as cofactor.

It carries out the reaction pyridoxamine 5'-phosphate + O2 + H2O = pyridoxal 5'-phosphate + H2O2 + NH4(+). The enzyme catalyses pyridoxine 5'-phosphate + O2 = pyridoxal 5'-phosphate + H2O2. It functions in the pathway cofactor metabolism; pyridoxal 5'-phosphate salvage; pyridoxal 5'-phosphate from pyridoxamine 5'-phosphate: step 1/1. The protein operates within cofactor metabolism; pyridoxal 5'-phosphate salvage; pyridoxal 5'-phosphate from pyridoxine 5'-phosphate: step 1/1. In terms of biological role, catalyzes the oxidation of either pyridoxine 5'-phosphate (PNP) or pyridoxamine 5'-phosphate (PMP) into pyridoxal 5'-phosphate (PLP). This is Pyridoxine/pyridoxamine 5'-phosphate oxidase from Pseudomonas savastanoi pv. phaseolicola (strain 1448A / Race 6) (Pseudomonas syringae pv. phaseolicola (strain 1448A / Race 6)).